Here is a 217-residue protein sequence, read N- to C-terminus: Phosphatase MT3486 (217 aa).

Residue D9 is the Nucleophile of the active site.

The protein belongs to the HAD-like hydrolase superfamily.

Able to hydrolyze geranyl diphosphate (GPP), farnesyl diphosphate (FPP) and geranylgeranyl diphosphate (GGPP) to respectively yield geraniol, farnesol and geranylgeraniol. This chain is Phosphatase MT3486, found in Mycobacterium tuberculosis (strain CDC 1551 / Oshkosh).